The sequence spans 116 residues: Putative superoxide reductase (116 aa).

Residues His20, His46, His52, Cys101, and His104 each coordinate Fe cation.

This sequence belongs to the desulfoferrodoxin family. The cofactor is Fe cation.

It catalyses the reaction reduced [rubredoxin] + superoxide + 2 H(+) = oxidized [rubredoxin] + H2O2. Its function is as follows. Uses electrons from reduced NADP, by way of rubredoxin and an oxidoreductase, to catalyze the reduction of superoxide to hydrogen peroxide. This Methanocaldococcus jannaschii (strain ATCC 43067 / DSM 2661 / JAL-1 / JCM 10045 / NBRC 100440) (Methanococcus jannaschii) protein is Putative superoxide reductase.